Here is a 366-residue protein sequence, read N- to C-terminus: Putative type II methyltransferase M.MjaORF1200P (366 aa).

An SAM-dependent MTase C5-type domain is found at 5–366 (LKFIDLFCGC…IARVIKENLK (362 aa)). Residue Cys133 is part of the active site.

The protein belongs to the class I-like SAM-binding methyltransferase superfamily. C5-methyltransferase family.

The catalysed reaction is a 2'-deoxycytidine in DNA + S-adenosyl-L-methionine = a 5-methyl-2'-deoxycytidine in DNA + S-adenosyl-L-homocysteine + H(+). Its function is as follows. A putative methylase that probably protects DNA from cleavage by the MjaORF1200P endonuclease. The sequence is that of Putative type II methyltransferase M.MjaORF1200P from Methanocaldococcus jannaschii (strain ATCC 43067 / DSM 2661 / JAL-1 / JCM 10045 / NBRC 100440) (Methanococcus jannaschii).